We begin with the raw amino-acid sequence, 335 residues long: Glucokinase (335 aa).

11–16 (ADIGGT) is a binding site for ATP.

It belongs to the bacterial glucokinase family.

The protein localises to the cytoplasm. It catalyses the reaction D-glucose + ATP = D-glucose 6-phosphate + ADP + H(+). This chain is Glucokinase, found in Stenotrophomonas maltophilia (strain K279a).